A 349-amino-acid chain; its full sequence is Anthranilate phosphoribosyltransferase (349 aa).

5-phospho-alpha-D-ribose 1-diphosphate is bound by residues Gly-82, 85-86 (GD), 92-95 (NVST), 110-118 (KHGNRAVSG), and Ser-122. Position 82 (Gly-82) interacts with anthranilate. Mg(2+) is bound at residue Ser-94. Asn-113 serves as a coordination point for anthranilate. Arg-168 lines the anthranilate pocket. Mg(2+) contacts are provided by Asp-227 and Glu-228.

Belongs to the anthranilate phosphoribosyltransferase family. In terms of assembly, homodimer. The cofactor is Mg(2+).

The catalysed reaction is N-(5-phospho-beta-D-ribosyl)anthranilate + diphosphate = 5-phospho-alpha-D-ribose 1-diphosphate + anthranilate. It participates in amino-acid biosynthesis; L-tryptophan biosynthesis; L-tryptophan from chorismate: step 2/5. Catalyzes the transfer of the phosphoribosyl group of 5-phosphorylribose-1-pyrophosphate (PRPP) to anthranilate to yield N-(5'-phosphoribosyl)-anthranilate (PRA). The polypeptide is Anthranilate phosphoribosyltransferase (Pseudomonas fluorescens (strain ATCC BAA-477 / NRRL B-23932 / Pf-5)).